We begin with the raw amino-acid sequence, 98 residues long: Large ribosomal subunit protein bL27 (98 aa).

A propeptide spanning residues 1-13 (MKKIWFHLDLQFF) is cleaved from the precursor.

This sequence belongs to the bacterial ribosomal protein bL27 family. Post-translationally, the N-terminus is cleaved by ribosomal processing cysteine protease Prp.

This is Large ribosomal subunit protein bL27 from Mycoplasmoides gallisepticum (strain R(low / passage 15 / clone 2)) (Mycoplasma gallisepticum).